The primary structure comprises 225 residues: Potassium-transporting ATPase KdpC subunit (225 aa).

The helical transmembrane segment at 18–38 (ALLVLTVVTGIVYPLVVTGVA) threads the bilayer. Residues 134-161 (NSVPGHPVRPEDVPADAVTSSGSGLDPD) are disordered.

The protein belongs to the KdpC family. The system is composed of three essential subunits: KdpA, KdpB and KdpC.

Its subcellular location is the cell membrane. In terms of biological role, part of the high-affinity ATP-driven potassium transport (or Kdp) system, which catalyzes the hydrolysis of ATP coupled with the electrogenic transport of potassium into the cytoplasm. This subunit acts as a catalytic chaperone that increases the ATP-binding affinity of the ATP-hydrolyzing subunit KdpB by the formation of a transient KdpB/KdpC/ATP ternary complex. The protein is Potassium-transporting ATPase KdpC subunit of Streptomyces coelicolor (strain ATCC BAA-471 / A3(2) / M145).